A 156-amino-acid chain; its full sequence is Anaerobic ribonucleoside-triphosphate reductase-activating protein (156 aa).

3 residues coordinate [4Fe-4S] cluster: Cys-26, Cys-30, and Cys-33. Residues 32–34 (GCY) and Gly-72 contribute to the S-adenosyl-L-methionine site.

It belongs to the organic radical-activating enzymes family. Forms a tetramer composed of two NrdD and two NrdG subunits. It depends on [4Fe-4S] cluster as a cofactor.

The catalysed reaction is glycyl-[protein] + reduced [flavodoxin] + S-adenosyl-L-methionine = glycin-2-yl radical-[protein] + semiquinone [flavodoxin] + 5'-deoxyadenosine + L-methionine + H(+). Activation of anaerobic ribonucleoside-triphosphate reductase under anaerobic conditions by generation of an organic free radical, using S-adenosylmethionine and reduced flavodoxin as cosubstrates to produce 5'-deoxy-adenosine. The polypeptide is Anaerobic ribonucleoside-triphosphate reductase-activating protein (NRDG) (Escherichia coli (Bacteriophage T4)).